The following is a 149-amino-acid chain: Calmodulin (149 aa).

N-acetylalanine is present on Ala-2. EF-hand domains are found at residues 8 to 43 (EQIA…LGQN), 44 to 79 (PTEA…KMKD), 81 to 116 (DSEE…LGEK), and 117 to 149 (LTDE…MMAK). Ca(2+) contacts are provided by Asp-21, Asp-23, Asp-25, Cys-27, Glu-32, Asp-57, Asp-59, Asn-61, Thr-63, Glu-68, Asp-94, Asp-96, Asn-98, and Glu-105. Lys-116 is modified (N6,N6,N6-trimethyllysine). Asp-130, Asp-132, Asp-134, Gln-136, and Glu-141 together coordinate Ca(2+).

Belongs to the calmodulin family.

Its function is as follows. Calmodulin mediates the control of a large number of enzymes, ion channels and other proteins by Ca(2+). Among the enzymes to be stimulated by the calmodulin-Ca(2+) complex are a number of protein kinases and phosphatases. The sequence is that of Calmodulin (CALM1) from Zea mays (Maize).